The primary structure comprises 418 residues: Putative FBD-associated F-box protein At5g56560 (418 aa).

Residues 4-60 (QTRLSDLPDELLLKILSALPMFKVTLATRLISRRWKGPWKLVPDVTFDDDDIPFKSF) form the F-box domain. Positions 340–390 (LWEEPAVVAKCLSEHLEIFEWRQYEGTEQERNVAGYILANATCLKMATFST) constitute an FBD domain.

The polypeptide is Putative FBD-associated F-box protein At5g56560 (Arabidopsis thaliana (Mouse-ear cress)).